Reading from the N-terminus, the 247-residue chain is ATP synthase subunit a, chloroplastic (247 aa).

The next 5 membrane-spanning stretches (helical) occupy residues 38–58 (QVLI…ILVV), 95–115 (VPFI…GALL), 134–154 (INTT…AGIS), 199–219 (LVVV…VMFL), and 220–240 (GLFT…AYIG).

The protein belongs to the ATPase A chain family. F-type ATPases have 2 components, CF(1) - the catalytic core - and CF(0) - the membrane proton channel. CF(1) has five subunits: alpha(3), beta(3), gamma(1), delta(1), epsilon(1). CF(0) has four main subunits: a, b, b' and c.

Its subcellular location is the plastid. The protein resides in the chloroplast thylakoid membrane. In terms of biological role, key component of the proton channel; it plays a direct role in the translocation of protons across the membrane. In Lotus japonicus (Lotus corniculatus var. japonicus), this protein is ATP synthase subunit a, chloroplastic.